The sequence spans 765 residues: Phosphoribosylformylglycinamidine synthase subunit PurL (765 aa).

The active site involves H59. Y62 and K104 together coordinate ATP. Residue E106 coordinates Mg(2+). Substrate is bound by residues 107–110 (SHNH) and R129. Residue H108 is the Proton acceptor of the active site. D130 provides a ligand contact to Mg(2+). Substrate is bound at residue Q254. D282 provides a ligand contact to Mg(2+). Residue 326-328 (ESQ) coordinates substrate. N522 and G559 together coordinate ATP. N560 serves as a coordination point for Mg(2+). Residue S562 coordinates substrate.

The protein belongs to the FGAMS family. As to quaternary structure, monomer. Part of the FGAM synthase complex composed of 1 PurL, 1 PurQ and 2 PurS subunits.

The protein resides in the cytoplasm. The enzyme catalyses N(2)-formyl-N(1)-(5-phospho-beta-D-ribosyl)glycinamide + L-glutamine + ATP + H2O = 2-formamido-N(1)-(5-O-phospho-beta-D-ribosyl)acetamidine + L-glutamate + ADP + phosphate + H(+). The protein operates within purine metabolism; IMP biosynthesis via de novo pathway; 5-amino-1-(5-phospho-D-ribosyl)imidazole from N(2)-formyl-N(1)-(5-phospho-D-ribosyl)glycinamide: step 1/2. Part of the phosphoribosylformylglycinamidine synthase complex involved in the purines biosynthetic pathway. Catalyzes the ATP-dependent conversion of formylglycinamide ribonucleotide (FGAR) and glutamine to yield formylglycinamidine ribonucleotide (FGAM) and glutamate. The FGAM synthase complex is composed of three subunits. PurQ produces an ammonia molecule by converting glutamine to glutamate. PurL transfers the ammonia molecule to FGAR to form FGAM in an ATP-dependent manner. PurS interacts with PurQ and PurL and is thought to assist in the transfer of the ammonia molecule from PurQ to PurL. This Thermobifida fusca (strain YX) protein is Phosphoribosylformylglycinamidine synthase subunit PurL.